A 230-amino-acid polypeptide reads, in one-letter code: 5'-methylthioadenosine/S-adenosylhomocysteine nucleosidase (230 aa).

Glutamate 12 (proton acceptor) is an active-site residue. Residues glycine 78, isoleucine 153, and methionine 174–glutamate 175 each bind substrate. The Proton donor role is filled by aspartate 198.

Belongs to the PNP/UDP phosphorylase family. MtnN subfamily.

The enzyme catalyses S-adenosyl-L-homocysteine + H2O = S-(5-deoxy-D-ribos-5-yl)-L-homocysteine + adenine. It carries out the reaction S-methyl-5'-thioadenosine + H2O = 5-(methylsulfanyl)-D-ribose + adenine. The catalysed reaction is 5'-deoxyadenosine + H2O = 5-deoxy-D-ribose + adenine. The protein operates within amino-acid biosynthesis; L-methionine biosynthesis via salvage pathway; S-methyl-5-thio-alpha-D-ribose 1-phosphate from S-methyl-5'-thioadenosine (hydrolase route): step 1/2. Functionally, catalyzes the irreversible cleavage of the glycosidic bond in both 5'-methylthioadenosine (MTA) and S-adenosylhomocysteine (SAH/AdoHcy) to adenine and the corresponding thioribose, 5'-methylthioribose and S-ribosylhomocysteine, respectively. Also cleaves 5'-deoxyadenosine, a toxic by-product of radical S-adenosylmethionine (SAM) enzymes, into 5-deoxyribose and adenine. The chain is 5'-methylthioadenosine/S-adenosylhomocysteine nucleosidase from Shewanella piezotolerans (strain WP3 / JCM 13877).